Here is a 285-residue protein sequence, read N- to C-terminus: Bifunctional protein FolD (285 aa).

Residues 165–167 (GRS) and serine 190 each bind NADP(+).

It belongs to the tetrahydrofolate dehydrogenase/cyclohydrolase family. As to quaternary structure, homodimer.

It catalyses the reaction (6R)-5,10-methylene-5,6,7,8-tetrahydrofolate + NADP(+) = (6R)-5,10-methenyltetrahydrofolate + NADPH. The enzyme catalyses (6R)-5,10-methenyltetrahydrofolate + H2O = (6R)-10-formyltetrahydrofolate + H(+). It participates in one-carbon metabolism; tetrahydrofolate interconversion. Catalyzes the oxidation of 5,10-methylenetetrahydrofolate to 5,10-methenyltetrahydrofolate and then the hydrolysis of 5,10-methenyltetrahydrofolate to 10-formyltetrahydrofolate. This chain is Bifunctional protein FolD, found in Streptococcus pneumoniae serotype 4 (strain ATCC BAA-334 / TIGR4).